The sequence spans 117 residues: Hydrogenase maturation factor HypA (117 aa).

Residue His2 participates in Ni(2+) binding. The Zn(2+) site is built by Cys73, Cys76, Cys89, and Cys92.

This sequence belongs to the HypA/HybF family.

Its function is as follows. Involved in the maturation of [NiFe] hydrogenases. Required for nickel insertion into the metal center of the hydrogenase. The protein is Hydrogenase maturation factor HypA of Shewanella baltica (strain OS195).